We begin with the raw amino-acid sequence, 397 residues long: Serpin B10 (397 aa).

The short motif at 74-77 (KKRK) is the Nuclear localization signal element.

Belongs to the serpin family. Ov-serpin subfamily.

The protein localises to the nucleus. Its subcellular location is the cytoplasm. In terms of biological role, protease inhibitor that may play a role in the regulation of protease activities during hematopoiesis and apoptosis induced by TNF. May regulate protease activities in the cytoplasm and in the nucleus. The chain is Serpin B10 (SERPINB10) from Bos taurus (Bovine).